The following is a 245-amino-acid chain: Acyl-protein thioesterase 1 (245 aa).

Catalysis depends on charge relay system residues S126, D182, and H214.

It belongs to the AB hydrolase superfamily. AB hydrolase 2 family.

Its subcellular location is the cytoplasm. It is found in the nucleus. The enzyme catalyses S-hexadecanoyl-L-cysteinyl-[protein] + H2O = L-cysteinyl-[protein] + hexadecanoate + H(+). Hydrolyzes fatty acids from S-acylated cysteine residues in proteins with a strong preference for palmitoylated G-alpha proteins over other acyl substrates. Mediates the deacylation of G-alpha proteins such as GPA1 in vivo, but has weak or no activity toward palmitoylated Ras proteins. Has weak lysophospholipase activity in vitro; however such activity may not exist in vivo. This is Acyl-protein thioesterase 1 from Neurospora crassa (strain ATCC 24698 / 74-OR23-1A / CBS 708.71 / DSM 1257 / FGSC 987).